The chain runs to 387 residues: Glucose-1-phosphate adenylyltransferase (387 aa).

Residues Tyr99, Gly164, 179-180 (EK), and Ser190 contribute to the alpha-D-glucose 1-phosphate site.

The protein belongs to the bacterial/plant glucose-1-phosphate adenylyltransferase family. In terms of assembly, homotetramer.

It carries out the reaction alpha-D-glucose 1-phosphate + ATP + H(+) = ADP-alpha-D-glucose + diphosphate. It functions in the pathway glycan biosynthesis; glycogen biosynthesis. Functionally, involved in the biosynthesis of ADP-glucose, a building block required for the elongation reactions to produce glycogen. Catalyzes the reaction between ATP and alpha-D-glucose 1-phosphate (G1P) to produce pyrophosphate and ADP-Glc. This is Glucose-1-phosphate adenylyltransferase from Geobacillus stearothermophilus (Bacillus stearothermophilus).